The following is a 78-amino-acid chain: RNA-binding protein Hfq (78 aa).

Positions 10–70 constitute a Sm domain; sequence DLFLNSVRKQ…ISTIMPSQPV (61 aa).

This sequence belongs to the Hfq family. Homohexamer.

Its function is as follows. RNA chaperone that binds small regulatory RNA (sRNAs) and mRNAs to facilitate mRNA translational regulation in response to envelope stress, environmental stress and changes in metabolite concentrations. Also binds with high specificity to tRNAs. In Brucella abortus (strain S19), this protein is RNA-binding protein Hfq.